A 567-amino-acid polypeptide reads, in one-letter code: Structural protein ORF567 (567 aa).

The tract at residues 7 to 393 (INALLGFPEE…MPIEHKPEQQ (387 aa)) is disordered. Over residues 65–79 (TPTPIRPAPPPPPPI) the composition is skewed to pro residues. Residues 180 to 200 (PKREPEHHTHGSTNNEHESKR) are compositionally biased toward basic and acidic residues. Residues 219 to 231 (THQTSPSHSSGGT) are compositionally biased toward low complexity. 2 stretches are compositionally biased toward pro residues: residues 253-278 (MPIP…PTPP) and 285-299 (TPTP…PPPT). Over residues 300–312 (HGSSSTNSSGSTN) the composition is skewed to low complexity. The span at 319–335 (PKPIPIPPTPPPPPPHH) shows a compositional bias: pro residues. Positions 343–353 (PKHESEHHDHG) are enriched in basic and acidic residues. Over residues 354-372 (SSSTNSSSSTSNSSSGGTN) the composition is skewed to low complexity.

The protein resides in the virion. In Acidianus two-tailed virus (ATV), this protein is Structural protein ORF567.